Consider the following 132-residue polypeptide: Small ribosomal subunit protein uS11 (132 aa).

This sequence belongs to the universal ribosomal protein uS11 family. As to quaternary structure, part of the 30S ribosomal subunit. Interacts with proteins S7 and S18. Binds to IF-3.

In terms of biological role, located on the platform of the 30S subunit, it bridges several disparate RNA helices of the 16S rRNA. Forms part of the Shine-Dalgarno cleft in the 70S ribosome. The sequence is that of Small ribosomal subunit protein uS11 from Cupriavidus pinatubonensis (strain JMP 134 / LMG 1197) (Cupriavidus necator (strain JMP 134)).